We begin with the raw amino-acid sequence, 467 residues long: Probable glutamate decarboxylase gamma (467 aa).

Lysine 278 is modified (N6-(pyridoxal phosphate)lysine).

Belongs to the group II decarboxylase family. Requires pyridoxal 5'-phosphate as cofactor.

It catalyses the reaction L-glutamate + H(+) = 4-aminobutanoate + CO2. The sequence is that of Probable glutamate decarboxylase gamma from Listeria innocua serovar 6a (strain ATCC BAA-680 / CLIP 11262).